The chain runs to 576 residues: Arginine--tRNA ligase (576 aa).

A 'HIGH' region motif is present at residues 122–132; that stretch reads PNVAKQMHVGH.

The protein belongs to the class-I aminoacyl-tRNA synthetase family. Monomer.

It localises to the cytoplasm. It catalyses the reaction tRNA(Arg) + L-arginine + ATP = L-arginyl-tRNA(Arg) + AMP + diphosphate. This Yersinia pseudotuberculosis serotype O:3 (strain YPIII) protein is Arginine--tRNA ligase.